Consider the following 1240-residue polypeptide: ABC transporter B family member 17 (1240 aa).

An ABC transmembrane type-1 1 domain is found at 35–324 (MALGLIGAVG…SLSNLKYFSE (290 aa)). The helical transmembrane segment at 36–56 (ALGLIGAVGDGFITPVVVFIF) threads the bilayer. N70 carries an N-linked (GlcNAc...) asparagine glycan. The next 5 helical transmembrane spans lie at 81 to 101 (VVAL…EGYC), 158 to 180 (LPNF…ILMW), 184 to 206 (IVGF…ALVS), 264 to 284 (GITI…TWYG), and 296 to 316 (GTVF…GQSL). The ABC transporter 1 domain maps to 359-595 (VEFNHVKFTY…IDGQYTSLVS (237 aa)). Position 394–401 (394–401 (GGSGSGKS)) interacts with ATP. 3 N-linked (GlcNAc...) asparagine glycosylation sites follow: N542, N609, and N642. The ABC transmembrane type-1 2 domain occupies 672–960 (ALYGCLSAAL…AGTMTTDLAR (289 aa)). The next 2 helical transmembrane spans lie at 681-701 (LVGV…SVFF) and 714-734 (IYVL…ISQH). Residue N769 is glycosylated (N-linked (GlcNAc...) asparagine). Helical transmembrane passes span 793–815 (MSLL…VIAW), 817–839 (LAIV…RVLL), 896–919 (WLAG…NFWY), and 923–943 (LIAD…IFVT). Residues 995–1233 (ITFLNVDFAY…GPTGTYFSLA (239 aa)) enclose the ABC transporter 2 domain. N1015 is a glycosylation site (N-linked (GlcNAc...) asparagine). 1030 to 1037 (GTSGSGKS) serves as a coordination point for ATP.

Belongs to the ABC transporter superfamily. ABCB family. Multidrug resistance exporter (TC 3.A.1.201) subfamily.

The protein localises to the membrane. This Arabidopsis thaliana (Mouse-ear cress) protein is ABC transporter B family member 17 (ABCB17).